The sequence spans 81 residues: High-potential iron-sulfur protein (81 aa).

[4Fe-4S] cluster-binding residues include C43, C46, C59, and C73.

The protein belongs to the high-potential iron-sulfur protein (HiPIP) family. As to quaternary structure, homodimer.

It is found in the periplasm. Specific class of high-redox-potential 4Fe-4S ferredoxins. Functions in anaerobic electron transport in most purple and in some other photosynthetic bacteria and in at least one genus (Paracoccus) of halophilic, denitrifying bacteria. In Halochromatium salexigens (Chromatium salexigens), this protein is High-potential iron-sulfur protein.